The following is a 364-amino-acid chain: Fructose-bisphosphate aldolase A (364 aa).

Residue tyrosine 5 is modified to Phosphotyrosine. Residue threonine 9 is modified to Phosphothreonine. Phosphoserine occurs at positions 36 and 39. At lysine 42 the chain carries N6-acetyllysine; alternate. A Glycyl lysine isopeptide (Lys-Gly) (interchain with G-Cter in SUMO1); alternate cross-link involves residue lysine 42. A Glycyl lysine isopeptide (Lys-Gly) (interchain with G-Cter in SUMO2); alternate cross-link involves residue lysine 42. Arginine 43 provides a ligand contact to beta-D-fructose 1,6-bisphosphate. A Phosphoserine modification is found at serine 46. Lysine 99 carries the N6-(2-hydroxyisobutyryl)lysine modification. Lysine 108 is subject to N6-acetyllysine. Lysine 111 is subject to N6-acetyllysine; alternate. Lysine 111 is modified (N6-malonyllysine; alternate). Serine 132 bears the Phosphoserine mark. At lysine 147 the chain carries N6-(2-hydroxyisobutyryl)lysine. The active-site Proton acceptor is the glutamate 188. Lysine 230 serves as the catalytic Schiff-base intermediate with dihydroxyacetone-P. Serine 272 is subject to Phosphoserine. Residues 272-274, serine 301, and arginine 304 each bind beta-D-fructose 1,6-bisphosphate; that span reads SGG. The residue at position 312 (lysine 312) is an N6-malonyllysine. Lysine 330 carries the N6-acetyllysine modification.

This sequence belongs to the class I fructose-bisphosphate aldolase family. As to quaternary structure, homotetramer. Interacts with SNX9 and WAS. Interacts with FBP2; the interaction blocks FBP2 inhibition by physiological concentrations of AMP and reduces inhibition by Ca(2+).

Its subcellular location is the cytoplasm. The protein resides in the myofibril. The protein localises to the sarcomere. It is found in the i band. It localises to the m line. The enzyme catalyses beta-D-fructose 1,6-bisphosphate = D-glyceraldehyde 3-phosphate + dihydroxyacetone phosphate. It participates in carbohydrate degradation; glycolysis; D-glyceraldehyde 3-phosphate and glycerone phosphate from D-glucose: step 4/4. Its function is as follows. Catalyzes the reversible conversion of beta-D-fructose 1,6-bisphosphate (FBP) into two triose phosphate and plays a key role in glycolysis and gluconeogenesis. In addition, may also function as scaffolding protein. The protein is Fructose-bisphosphate aldolase A (ALDOA) of Pongo abelii (Sumatran orangutan).